Reading from the N-terminus, the 639-residue chain is 1-deoxy-D-xylulose-5-phosphate synthase (639 aa).

Thiamine diphosphate contacts are provided by residues His79 and 120 to 122 (AHS). Asp151 lines the Mg(2+) pocket. Thiamine diphosphate-binding positions include 152-153 (GA), Asn180, Tyr289, and Glu371. Asn180 lines the Mg(2+) pocket.

It belongs to the transketolase family. DXPS subfamily. Homodimer. Mg(2+) is required as a cofactor. It depends on thiamine diphosphate as a cofactor.

It carries out the reaction D-glyceraldehyde 3-phosphate + pyruvate + H(+) = 1-deoxy-D-xylulose 5-phosphate + CO2. Its pathway is metabolic intermediate biosynthesis; 1-deoxy-D-xylulose 5-phosphate biosynthesis; 1-deoxy-D-xylulose 5-phosphate from D-glyceraldehyde 3-phosphate and pyruvate: step 1/1. Functionally, catalyzes the acyloin condensation reaction between C atoms 2 and 3 of pyruvate and glyceraldehyde 3-phosphate to yield 1-deoxy-D-xylulose-5-phosphate (DXP). The chain is 1-deoxy-D-xylulose-5-phosphate synthase from Rhizorhabdus wittichii (strain DSM 6014 / CCUG 31198 / JCM 15750 / NBRC 105917 / EY 4224 / RW1) (Sphingomonas wittichii).